The following is a 261-amino-acid chain: MRRTVKDFRNAKGQRLVYLTAYDYPTARLAEAAGVDAILVGDSLGMVVLGYPSTVPVTLEEMLHHTKAARRGAPETFLVADLPYLAYATLDRALLAAERLLKEGGADAVKLEGGEEVAEIVQGLVRAGVPVLGHVGLTPQTASQLGGYKLQGRRPEEAERILKGALALEEAGAYGVVLEMVPARLAKEVTERLSVHTVGIGAGPHTDAQVLVFHDVVGLYGDFKPRFVKRYLEAGRLIQEALSRYAQEVREGVFPGEEHSF.

The Mg(2+) site is built by Asp42 and Asp81. Residues 42 to 43 (DS), Asp81, and Lys110 contribute to the 3-methyl-2-oxobutanoate site. Glu112 provides a ligand contact to Mg(2+). Glu179 serves as the catalytic Proton acceptor.

Belongs to the PanB family. Homodecamer; pentamer of dimers. Mg(2+) is required as a cofactor.

It localises to the cytoplasm. The catalysed reaction is 3-methyl-2-oxobutanoate + (6R)-5,10-methylene-5,6,7,8-tetrahydrofolate + H2O = 2-dehydropantoate + (6S)-5,6,7,8-tetrahydrofolate. The protein operates within cofactor biosynthesis; (R)-pantothenate biosynthesis; (R)-pantoate from 3-methyl-2-oxobutanoate: step 1/2. Its function is as follows. Catalyzes the reversible reaction in which hydroxymethyl group from 5,10-methylenetetrahydrofolate is transferred onto alpha-ketoisovalerate to form ketopantoate. The protein is 3-methyl-2-oxobutanoate hydroxymethyltransferase of Thermus thermophilus (strain ATCC 27634 / DSM 579 / HB8).